An 866-amino-acid polypeptide reads, in one-letter code: Probable outer membrane usher protein ElfC (866 aa).

Residues 1 to 35 (MYRTHRQHSLLSSGGVPSFIGGLVVFVSAAFNAQA) form the signal peptide.

This sequence belongs to the fimbrial export usher family.

The protein localises to the cell outer membrane. Its function is as follows. Part of the elfADCG-ycbUVF fimbrial operon, which promotes adhesion of bacteria to different abiotic surfaces. Could be involved in the export and assembly of the ElfA fimbrial subunits across the outer membrane. The sequence is that of Probable outer membrane usher protein ElfC (elfC) from Escherichia coli (strain K12).